A 332-amino-acid chain; its full sequence is Beta-ketoacyl-[acyl-carrier-protein] synthase III (332 aa).

Residues Cys116 and His257 contribute to the active site. An ACP-binding region spans residues 258–262 (QANQR). Asn287 is an active-site residue.

This sequence belongs to the thiolase-like superfamily. FabH family. Homodimer.

The protein localises to the cytoplasm. It catalyses the reaction malonyl-[ACP] + acetyl-CoA + H(+) = 3-oxobutanoyl-[ACP] + CO2 + CoA. It functions in the pathway lipid metabolism; fatty acid biosynthesis. Catalyzes the condensation reaction of fatty acid synthesis by the addition to an acyl acceptor of two carbons from malonyl-ACP. Catalyzes the first condensation reaction which initiates fatty acid synthesis and may therefore play a role in governing the total rate of fatty acid production. Possesses both acetoacetyl-ACP synthase and acetyl transacylase activities. Its substrate specificity determines the biosynthesis of branched-chain and/or straight-chain of fatty acids. The sequence is that of Beta-ketoacyl-[acyl-carrier-protein] synthase III from Acaryochloris marina (strain MBIC 11017).